The following is a 199-amino-acid chain: Small ribosomal subunit protein uS4 (199 aa).

The 64-residue stretch at 94 to 157 folds into the S4 RNA-binding domain; that stretch reads SRLDNIVYRM…QNVPTILASI (64 aa).

It belongs to the universal ribosomal protein uS4 family. Part of the 30S ribosomal subunit. Contacts protein S5. The interaction surface between S4 and S5 is involved in control of translational fidelity.

Its function is as follows. One of the primary rRNA binding proteins, it binds directly to 16S rRNA where it nucleates assembly of the body of the 30S subunit. Functionally, with S5 and S12 plays an important role in translational accuracy. The protein is Small ribosomal subunit protein uS4 of Mycoplasma mobile (strain ATCC 43663 / 163K / NCTC 11711) (Mesomycoplasma mobile).